The chain runs to 438 residues: Trigger factor (438 aa).

The region spanning 162–247 is the PPIase FKBP-type domain; sequence GDRVNINYQG…LNKVEAPKLP (86 aa).

The protein belongs to the FKBP-type PPIase family. Tig subfamily.

It localises to the cytoplasm. The enzyme catalyses [protein]-peptidylproline (omega=180) = [protein]-peptidylproline (omega=0). Involved in protein export. Acts as a chaperone by maintaining the newly synthesized protein in an open conformation. Functions as a peptidyl-prolyl cis-trans isomerase. The polypeptide is Trigger factor (Nitrosomonas eutropha (strain DSM 101675 / C91 / Nm57)).